The chain runs to 138 residues: Basic phospholipase A2 homolog Vur-S49 (138 aa).

The N-terminal stretch at 1 to 16 is a signal peptide; it reads MRALWIVAVCLIGVEG. 7 disulfide bridges follow: C42–C131, C44–C60, C59–C111, C65–C138, C66–C104, C73–C97, and C91–C102. An important for membrane-damaging activities in eukaryotes and bacteria; heparin-binding region spans residues 121–133; it reads KKYKVYLRFKCKG.

The protein belongs to the phospholipase A2 family. Group II subfamily. S49 sub-subfamily. As to expression, expressed by the venom gland.

It is found in the secreted. Functionally, snake venom phospholipase A2 homolog that lacks enzymatic activity. Is able to suppress the acetylcholine (ACh)-evoked current mediated by alpha-7 (CHRNA7)-similar nAChRs in L.stagnalis neurons (IC(50)=2.18 uM). This activity is only partially reversible and seems to be non-competitive. The protein is Basic phospholipase A2 homolog Vur-S49 of Vipera renardi (Steppe viper).